Reading from the N-terminus, the 147-residue chain is Epididymal secretory protein E3-alpha (147 aa).

An N-terminal signal peptide occupies residues 1–25; the sequence is MTSSLKIWGILLALLCILCRLCVYS.

In terms of tissue distribution, epididymis, with predominant expression in the corpus region. Moderately expressed in the vas deferens; only low levels are detectable in the caput and cauda regions.

It localises to the secreted. Possible function in sperm maturation. This Homo sapiens (Human) protein is Epididymal secretory protein E3-alpha (EDDM3A).